Consider the following 523-residue polypeptide: Nuclear receptor ROR-alpha (523 aa).

Low complexity predominate over residues 1-26 (MESAPAAPDPAASEPGSSGADAAAGS). Residues 1 to 63 (MESAPAAPDP…SRGISVTKKT (63 aa)) are disordered. K38 bears the N6-methyllysine mark. The segment covering 48–57 (QSYSSTSRGI) has biased composition (polar residues). 2 consecutive NR C4-type zinc fingers follow at residues 73-93 (CKIC…CEGC) and 109-133 (CPRQ…LQKC). The nuclear receptor DNA-binding region spans 73-138 (CKICGDKSSG…RLQKCLAVGM (66 aa)). Positions 154–183 (DSLYAEVQKHRMQQQQRDHQQQPGEAEPLT) are disordered. T183 bears the Phosphothreonine; by MAPK1 mark. K240 participates in a covalent cross-link: Glycyl lysine isopeptide (Lys-Gly) (interchain with G-Cter in SUMO). One can recognise an NR LBD domain in the interval 272 to 510 (ELEHLAQNIS…LHFPPLYKEL (239 aa)). An AF-2 motif is present at residues 506-523 (LYKELFTSEFEPAMQIDG).

This sequence belongs to the nuclear hormone receptor family. NR1 subfamily. Monomer. Interacts (via the DNA-binding domain) with HIF1A; the interaction enhances HIF1A transcription under hypoxia through increasing protein stability. Interacts with CEBPB; the interaction disrupts the interaction CEBPB:EP300. Interacts with the coactivators NCOA2, PPARGC1A (via LXXLL motif), EP300 and MED1. Interacts with the corepressor NCOR1. Interacts with MAGED1 and CTNNB1. Interacts with CRY1 and PER2. Interacts (via AF-2 motif) with PROX1. Interacts with NRIP1. Isoform 4 interacts (via AF-2 motif) with isoform 1 of FOXP3 (via LXXLL motif). In terms of processing, phosphorylation by conventional PKCs in neurons inhibits transcriptional activity. Phosphorylated on Thr-183 by MAPK1/ERK1 in vitro. Post-translationally, sumoylated by SENP1 and SENP2. Sumoylation, promoted by PIAS2, PIAS3, PIAS4 but not PIAS1, enhances the transcriptional activity. Desumoylated by SENP1. Ubiquitinated, leading to its degradation by the proteasome. Proteasomal degradation is required for efficient transcriptional activity and is prevented by HR. In terms of processing, monomethylated at Lys-38 by EZH2, this creates a degron recognized by a DCX (DDB1-DCAF1/VPRBP-CUL4A-RBX1) E3 ubiquitin ligase complex. In terms of tissue distribution, widely expressed in a number of tissues. Expressed in both regulatory T-cells (Treg) and effector T-cells (Teff). Isoform 4: Highly expressed in the central nervous system, including in the cerebellum.

It localises to the nucleus. Nuclear receptor that binds DNA as a monomer to ROR response elements (RORE) containing a single core motif half-site 5'-AGGTCA-3' preceded by a short A-T-rich sequence. Key regulator of embryonic development, cellular differentiation, immunity, circadian rhythm as well as lipid, steroid, xenobiotics and glucose metabolism. Considered to have intrinsic transcriptional activity, have some natural ligands like oxysterols that act as agonists (25-hydroxycholesterol) or inverse agonists (7-oxygenated sterols), enhancing or repressing the transcriptional activity, respectively. Recruits distinct combinations of cofactors to target genes regulatory regions to modulate their transcriptional expression, depending on the tissue, time and promoter contexts. Regulates genes involved in photoreceptor development including OPN1SW, OPN1SM and ARR3 and skeletal muscle development with MYOD1. Required for proper cerebellum development. Regulates SHH gene expression, among others, to induce granule cells proliferation as well as expression of genes involved in calcium-mediated signal transduction. Regulates the circadian expression of several clock genes, including CLOCK, BMAL1, NPAS2 and CRY1. Competes with NR1D1 for binding to their shared DNA response element on some clock genes such as BMAL1, CRY1 and NR1D1 itself, resulting in NR1D1-mediated repression or RORA-mediated activation of clock genes expression, leading to the circadian pattern of clock genes expression. Therefore influences the period length and stability of the clock. Regulates genes involved in lipid metabolism such as apolipoproteins APOA1, APOA5, APOC3 and PPARG. In liver, has specific and redundant functions with RORC as positive or negative modulator of expression of genes encoding phase I and phase II proteins involved in the metabolism of lipids, steroids and xenobiotics, such as CYP7B1 and SULT2A1. Induces a rhythmic expression of some of these genes. In addition, interplays functionally with NR1H2 and NR1H3 for the regulation of genes involved in cholesterol metabolism. Also involved in the regulation of hepatic glucose metabolism through the modulation of G6PC1 and PCK1. In adipose tissue, plays a role as negative regulator of adipocyte differentiation, probably acting through dual mechanisms. May suppress CEBPB-dependent adipogenesis through direct interaction and PPARG-dependent adipogenesis through competition for DNA-binding. Downstream of IL6 and TGFB and synergistically with RORC isoform 2, is implicated in the lineage specification of uncommitted CD4(+) T-helper (T(H)) cells into T(H)17 cells, antagonizing the T(H)1 program. Probably regulates IL17 and IL17F expression on T(H) by binding to the essential enhancer conserved non-coding sequence 2 (CNS2) in the IL17-IL17F locus. Involved in hypoxia signaling by interacting with and activating the transcriptional activity of HIF1A. May inhibit cell growth in response to cellular stress. May exert an anti-inflammatory role by inducing CHUK expression and inhibiting NF-kappa-B signaling. The sequence is that of Nuclear receptor ROR-alpha (RORA) from Homo sapiens (Human).